The sequence spans 104 residues: Probable head completion protein 1 (104 aa).

It belongs to the skunalikevirus head completion protein 1 family.

It localises to the virion. Functionally, probable head completion protein that exhibits an open central channel for viral DNA ejection. Part of the head-tail connector by binding to the portal protein and to the head completion protein 2. Plays a role in morphogenesis of the virion capsid after genome packaging. This Lactococcus lactis (Lactococcus lactis bacteriophage p2) protein is Probable head completion protein 1.